Here is a 294-residue protein sequence, read N- to C-terminus: Lipoyl synthase (294 aa).

C41, C46, C52, C67, C71, C74, and S281 together coordinate [4Fe-4S] cluster. A Radical SAM core domain is found at 53-270 (FNNGTATFMI…KLESLAMGFT (218 aa)).

Belongs to the radical SAM superfamily. Lipoyl synthase family. It depends on [4Fe-4S] cluster as a cofactor.

The protein resides in the cytoplasm. The enzyme catalyses [[Fe-S] cluster scaffold protein carrying a second [4Fe-4S](2+) cluster] + N(6)-octanoyl-L-lysyl-[protein] + 2 oxidized [2Fe-2S]-[ferredoxin] + 2 S-adenosyl-L-methionine + 4 H(+) = [[Fe-S] cluster scaffold protein] + N(6)-[(R)-dihydrolipoyl]-L-lysyl-[protein] + 4 Fe(3+) + 2 hydrogen sulfide + 2 5'-deoxyadenosine + 2 L-methionine + 2 reduced [2Fe-2S]-[ferredoxin]. It participates in protein modification; protein lipoylation via endogenous pathway; protein N(6)-(lipoyl)lysine from octanoyl-[acyl-carrier-protein]: step 2/2. Its function is as follows. Catalyzes the radical-mediated insertion of two sulfur atoms into the C-6 and C-8 positions of the octanoyl moiety bound to the lipoyl domains of lipoate-dependent enzymes, thereby converting the octanoylated domains into lipoylated derivatives. This Baumannia cicadellinicola subsp. Homalodisca coagulata protein is Lipoyl synthase.